The primary structure comprises 382 residues: Alkaline serine protease ver112 (382 aa).

The N-terminal stretch at M1 to A15 is a signal peptide. Positions A16–N102 are excised as a propeptide. Residues S56–F99 enclose the Inhibitor I9 domain. The region spanning T111 to T382 is the Peptidase S8 domain. 2 disulfides stabilise this stretch: C138–C227 and C282–C353. Catalysis depends on charge relay system residues D143, H173, and S328.

The protein belongs to the peptidase S8 family.

It is found in the secreted. Its activity is regulated as follows. Inhibited by phenylmethylsulfonyl fluoride (PMSF). In terms of biological role, serine protease which can degrade the nematode cuticle. This is Alkaline serine protease ver112 from Corniculantispora psalliotae (Lecanicillium psalliotae).